Reading from the N-terminus, the 346-residue chain is Holliday junction branch migration complex subunit RuvB (346 aa).

The large ATPase domain (RuvB-L) stretch occupies residues 1–182 (MSEPARLISP…FGIPVRLSFY (182 aa)). ATP is bound by residues Leu-21, Arg-22, Gly-63, Lys-66, Thr-67, Thr-68, 129–131 (EDF), Arg-172, Tyr-182, and Arg-219. Thr-67 is a Mg(2+) binding site. The segment at 183–253 (TVEELELIVR…IADEALTRLL (71 aa)) is small ATPAse domain (RuvB-S). Residues 256-346 (NVGFDQLDKR…AQFRLFQEDN (91 aa)) form a head domain (RuvB-H) region. Residues Arg-292, Arg-311, and Arg-316 each coordinate DNA.

The protein belongs to the RuvB family. Homohexamer. Forms an RuvA(8)-RuvB(12)-Holliday junction (HJ) complex. HJ DNA is sandwiched between 2 RuvA tetramers; dsDNA enters through RuvA and exits via RuvB. An RuvB hexamer assembles on each DNA strand where it exits the tetramer. Each RuvB hexamer is contacted by two RuvA subunits (via domain III) on 2 adjacent RuvB subunits; this complex drives branch migration. In the full resolvosome a probable DNA-RuvA(4)-RuvB(12)-RuvC(2) complex forms which resolves the HJ.

The protein localises to the cytoplasm. The catalysed reaction is ATP + H2O = ADP + phosphate + H(+). Its function is as follows. The RuvA-RuvB-RuvC complex processes Holliday junction (HJ) DNA during genetic recombination and DNA repair, while the RuvA-RuvB complex plays an important role in the rescue of blocked DNA replication forks via replication fork reversal (RFR). RuvA specifically binds to HJ cruciform DNA, conferring on it an open structure. The RuvB hexamer acts as an ATP-dependent pump, pulling dsDNA into and through the RuvAB complex. RuvB forms 2 homohexamers on either side of HJ DNA bound by 1 or 2 RuvA tetramers; 4 subunits per hexamer contact DNA at a time. Coordinated motions by a converter formed by DNA-disengaged RuvB subunits stimulates ATP hydrolysis and nucleotide exchange. Immobilization of the converter enables RuvB to convert the ATP-contained energy into a lever motion, pulling 2 nucleotides of DNA out of the RuvA tetramer per ATP hydrolyzed, thus driving DNA branch migration. The RuvB motors rotate together with the DNA substrate, which together with the progressing nucleotide cycle form the mechanistic basis for DNA recombination by continuous HJ branch migration. Branch migration allows RuvC to scan DNA until it finds its consensus sequence, where it cleaves and resolves cruciform DNA. The polypeptide is Holliday junction branch migration complex subunit RuvB (Rhizobium johnstonii (strain DSM 114642 / LMG 32736 / 3841) (Rhizobium leguminosarum bv. viciae)).